Here is a 472-residue protein sequence, read N- to C-terminus: Transmembrane protein 8B (472 aa).

Residues 1 to 37 form a disordered region; sequence MNMPQSLGNQPLPPEPPSLRTPAEGPGATSPPEHCWP. Over 1–233 the chain is Extracellular; the sequence is MNMPQSLGNQ…ADALTYGFQL (233 aa). N-linked (GlcNAc...) asparagine glycosylation is found at N92 and N100. The region spanning 182–221 is the EGF-like domain; the sequence is FLSPCVDDCGPYGQCKLLRTHNYLYAACECKAGWRGWGCT. 3 cysteine pairs are disulfide-bonded: C186/C196, C190/C209, and C211/C220. The chain crosses the membrane as a helical span at residues 234-254; sequence LSTLLLCLSNLMFLPPVVLAI. Residues 255 to 257 are Cytoplasmic-facing; that stretch reads RSR. Residues 258–277 traverse the membrane as a helical segment; the sequence is YVLEAAVYTFTMFFSTFYHA. The Extracellular portion of the chain corresponds to 278–292; it reads CDQPGIVVFCIMDYD. Residues 293–313 form a helical membrane-spanning segment; the sequence is VLQFCDFLGSLMSVWVTVIAM. The Cytoplasmic portion of the chain corresponds to 314-315; it reads AR. Residues 316–336 form a helical membrane-spanning segment; sequence LQPVVKQVLYLLGAMLLSMAL. Residues 337 to 342 are Extracellular-facing; the sequence is QLDRHG. A helical transmembrane segment spans residues 343–363; the sequence is LWNLLGPSLFALGILATAWTV. Residues 364–379 are Cytoplasmic-facing; the sequence is RSVRRRHCYPPTWRRW. A helical transmembrane segment spans residues 380–400; sequence LFCLCPGSLIAGSAILLYAFV. At 401 to 405 the chain is on the extracellular side; sequence ETRDN. The helical transmembrane segment at 406-426 threads the bilayer; sequence YFYIHSIWHMLIAGSVGFLLP. The Cytoplasmic segment spans residues 427 to 472; that stretch reads PRAKTDRRVPSGARARGCGYQLCINEQEELGLVGPGGATVSSICAS.

This sequence belongs to the TMEM8 family. May interact with EZR. In terms of processing, N-glycosylated.

It is found in the cell membrane. The protein localises to the cytoplasm. It localises to the nucleus. The protein resides in the mitochondrion. Its subcellular location is the endoplasmic reticulum. May function as a regulator of the EGFR pathway. Probable tumor suppressor which may function in cell growth, proliferation and adhesion. This chain is Transmembrane protein 8B (TMEM8B), found in Bos taurus (Bovine).